The sequence spans 300 residues: Protoheme IX farnesyltransferase (300 aa).

Transmembrane regions (helical) follow at residues 24–44 (VTQL…PGMV), 46–66 (WHVL…AFAI), 94–114 (PQIL…LYTF), 118–138 (LTMW…TLLL), 146–166 (IVIG…AVTG), 172–192 (AWIL…VLAL), 217–237 (LHIL…FISG), 239–259 (SGAV…AYAW), and 278–298 (IVYL…RPLL).

Belongs to the UbiA prenyltransferase family. Protoheme IX farnesyltransferase subfamily.

It is found in the cell inner membrane. The enzyme catalyses heme b + (2E,6E)-farnesyl diphosphate + H2O = Fe(II)-heme o + diphosphate. It participates in porphyrin-containing compound metabolism; heme O biosynthesis; heme O from protoheme: step 1/1. In terms of biological role, converts heme B (protoheme IX) to heme O by substitution of the vinyl group on carbon 2 of heme B porphyrin ring with a hydroxyethyl farnesyl side group. The chain is Protoheme IX farnesyltransferase from Burkholderia lata (strain ATCC 17760 / DSM 23089 / LMG 22485 / NCIMB 9086 / R18194 / 383).